The sequence spans 196 residues: ATP-dependent Clp protease proteolytic subunit (196 aa).

Catalysis depends on Ser-98, which acts as the Nucleophile. His-123 is an active-site residue.

Belongs to the peptidase S14 family. As to quaternary structure, fourteen ClpP subunits assemble into 2 heptameric rings which stack back to back to give a disk-like structure with a central cavity, resembling the structure of eukaryotic proteasomes.

The protein resides in the cytoplasm. The catalysed reaction is Hydrolysis of proteins to small peptides in the presence of ATP and magnesium. alpha-casein is the usual test substrate. In the absence of ATP, only oligopeptides shorter than five residues are hydrolyzed (such as succinyl-Leu-Tyr-|-NHMec, and Leu-Tyr-Leu-|-Tyr-Trp, in which cleavage of the -Tyr-|-Leu- and -Tyr-|-Trp bonds also occurs).. In terms of biological role, cleaves peptides in various proteins in a process that requires ATP hydrolysis. Has a chymotrypsin-like activity. Plays a major role in the degradation of misfolded proteins. In Acidobacterium capsulatum (strain ATCC 51196 / DSM 11244 / BCRC 80197 / JCM 7670 / NBRC 15755 / NCIMB 13165 / 161), this protein is ATP-dependent Clp protease proteolytic subunit.